We begin with the raw amino-acid sequence, 24 residues long: Brevinin-1Sb (24 aa).

The cysteines at positions 18 and 24 are disulfide-linked.

In terms of tissue distribution, expressed by the skin glands.

It localises to the secreted. Functionally, antibacterial activity against Gram-negative bacterium E.coli. In Lithobates sphenocephalus (Southern leopard frog), this protein is Brevinin-1Sb.